Consider the following 197-residue polypeptide: Guanylate kinase (197 aa).

The 179-residue stretch at 7 to 185 folds into the Guanylate kinase-like domain; sequence GLIIILSSPS…TLKKIHEIIV (179 aa). Position 14–21 (14–21) interacts with ATP; that stretch reads SPSGTGKS.

The protein belongs to the guanylate kinase family.

It localises to the cytoplasm. It catalyses the reaction GMP + ATP = GDP + ADP. Its function is as follows. Essential for recycling GMP and indirectly, cGMP. This chain is Guanylate kinase, found in Rickettsia typhi (strain ATCC VR-144 / Wilmington).